The following is a 735-amino-acid chain: 2-5A-dependent ribonuclease (735 aa).

Residues 1 to 21 form a disordered region; it reads METPDYNTPQGGTPSAGSQRT. ANK repeat units follow at residues 24–53, 58–87, 91–120, 124–153, 167–197, 201–234, 238–268, 272–301, and 303–328; these read EDDS…DANA, WGWT…DPHR, NGAT…DVNE, NGFT…NVNL, GGAT…EVDA, MGRN…DVNV, RGKT…NIDA, EGKT…DKCD, and LVWI…NPDT. The binding to TMEV Leader protein stretch occupies residues 26–51; sequence DSSLIKAVQKGDVVRVQQLLEKGADA. 2-5A binding (P-loop) stretches follow at residues 229–242 and 253–275; these read GADV…GKTP and GLVQ…EGKT. The Protein kinase domain maps to 364 to 584; the sequence is IHDDYKIAGT…LVDLLGHPFF (221 aa). The C6-type zinc finger occupies 401-436; it reads CKEVSCLRDCGDHSNLVAFYGREDDKGCLYVCVSLC. Positions 587–722 constitute a KEN domain; the sequence is WENRYRTLRN…KHFPQPPPRL (136 aa). A disordered region spans residues 714–735; sequence HFPQPPPRLSVPEAVGPGGIQS.

Belongs to the protein kinase superfamily. In terms of assembly, (Microbial infection) Interacts (via N-terminus) with TMEV leader protein; this interaction prevents RNASEL activation by its substrate 2'-5' oligoadenylates. As to quaternary structure, monomer (inactive form) or homodimer. Interacts with ABCE1; this interaction inhibits the RNASEL. Requires Mn(2+) as cofactor. The cofactor is Mg(2+). As to expression, expressed in spleen, thymus, lung, testis, kidney, liver and heart.

The protein resides in the cytoplasm. The protein localises to the mitochondrion. After binding to 2-5A (5'-phosphorylated 2',5'-linked oligoadenylates) the homodimerization and subsequent activation occurs. Inhibited by RNASEL inhibitor ABCE1/RLI, a cytoplasmic member of the ATP-binding cassette (ABC) transporter family. In terms of biological role, endoribonuclease that functions in the interferon (IFN) antiviral response. In INF treated and virus infected cells, RNASEL probably mediates its antiviral effects through a combination of direct cleavage of single-stranded viral RNAs, inhibition of protein synthesis through the degradation of rRNA, induction of apoptosis, and induction of other antiviral genes. RNASEL mediated apoptosis is the result of a JNK-dependent stress-response pathway leading to cytochrome c release from mitochondria and caspase-dependent apoptosis. Therefore, activation of RNASEL could lead to elimination of virus infected cells under some circumstances. In the crosstalk between autophagy and apoptosis proposed to induce autophagy as an early stress response to small double-stranded RNA and at later stages of prolonged stress to activate caspase-dependent proteolytic cleavage of BECN1 to terminate autophagy and promote apoptosis. Might play a central role in the regulation of mRNA turnover. Cleaves 3' of UpNp dimers, with preference for UU and UA sequences, to sets of discrete products ranging from between 4 and 22 nucleotides in length. The chain is 2-5A-dependent ribonuclease (Rnasel) from Mus musculus (Mouse).